Consider the following 504-residue polypeptide: Cytochrome P450 4A25 (504 aa).

2 helical membrane passes run 6–26 (LASASGLLQVASLLGLLLLLL) and 110–130 (APVLYRLLIPWIGCGLLLLNG). Cys-451 is a binding site for heme.

Belongs to the cytochrome P450 family. Requires heme as cofactor.

The protein resides in the endoplasmic reticulum membrane. It catalyses the reaction an omega-methyl-long-chain fatty acid + reduced [NADPH--hemoprotein reductase] + O2 = an omega-hydroxy-long-chain fatty acid + oxidized [NADPH--hemoprotein reductase] + H2O + H(+). Functionally, catalyzes the omega- and (omega-1)-hydroxylation of various fatty acids such as laurate and palmitate. Has no activity toward taurochenodeoxycholic acid. The chain is Cytochrome P450 4A25 (CYP4A25) from Sus scrofa (Pig).